A 372-amino-acid chain; its full sequence is tRNA-specific 2-thiouridylase MnmA (372 aa).

ATP is bound by residues 16 to 23 and methionine 42; that span reads GMSGGVDS. The tract at residues 102–104 is interaction with target base in tRNA; sequence NPD. Residue cysteine 107 is the Nucleophile of the active site. A disulfide bridge links cysteine 107 with cysteine 205. Glycine 132 is a binding site for ATP. The segment at 155 to 157 is interaction with tRNA; it reads KDQ. Cysteine 205 serves as the catalytic Cysteine persulfide intermediate. The tract at residues 317 to 318 is interaction with tRNA; it reads RY.

This sequence belongs to the MnmA/TRMU family.

The protein localises to the cytoplasm. It catalyses the reaction S-sulfanyl-L-cysteinyl-[protein] + uridine(34) in tRNA + AH2 + ATP = 2-thiouridine(34) in tRNA + L-cysteinyl-[protein] + A + AMP + diphosphate + H(+). Catalyzes the 2-thiolation of uridine at the wobble position (U34) of tRNA, leading to the formation of s(2)U34. The polypeptide is tRNA-specific 2-thiouridylase MnmA (Shewanella frigidimarina (strain NCIMB 400)).